Here is a 239-residue protein sequence, read N- to C-terminus: MAHAGRTGYDNREIVMKYIHYKLSQRGYEWDAGDVGAAPPGAAPAPGIFSSQPGHTPHPAASRDPVARTSPLQTPAAPGAAAGPALSPVPPVVHLTLRQAGDDFSRRYRRDFAEMSSQLHLTPFTARGRFATVVEELFRDGVNWGRIVAFFEFGGVMCVESVNREMSPLVDNIALWMTEYLNRHLHTWIQDNGGWDAFVELYGPSMRPLFDFSWLSLKTLLSLALVGACITLGAYLGHK.

A BH4 motif is present at residues 10 to 30 (DNREIVMKYIHYKLSQRGYEW). The segment at 39–85 (PPGAAPAPGIFSSQPGHTPHPAASRDPVARTSPLQTPAAPGAAAGPA) is disordered. At Thr69 the chain carries Phosphothreonine; by MAPK8. Ser70 carries the post-translational modification Phosphoserine; by MAPK8 and PKC. Positions 75–85 (PAAPGAAAGPA) are enriched in low complexity. Residue Ser87 is modified to Phosphoserine; by MAPK8. A required for interaction with SEPTIN4 isoform ARTS. Required XIAP-mediated ubiquitination and apoptosis region spans residues 92–107 (VVHLTLRQAGDDFSRR). The BH3 motif lies at 93–107 (VHLTLRQAGDDFSRR). The BH1 signature appears at 136–155 (ELFRDGVNWGRIVAFFEFGG). Residues 187-202 (TWIQDNGGWDAFVELY) carry the BH2 motif. A helical transmembrane segment spans residues 212–233 (FSWLSLKTLLSLALVGACITLG).

This sequence belongs to the Bcl-2 family. As to quaternary structure, forms homodimers, and heterodimers with BAX, BAD, BAK and Bcl-X(L). Heterodimerization with BAX requires intact BH1 and BH2 motifs, and is necessary for anti-apoptotic activity. Part of a complex composed of SEPTIN4 isoform ARTS, XIAP and BCL2, within the complex interacts (via BH3 domain) with SEPTIN4 isoform ARTS and XIAP, SEPTIN4 isoform ARTS acts as a scaffold protein and stabilizes the complex. Component of the complex, at least composed of LRPPRC, BECN1 and BCL2; the interactions prevent BECN1 from forming an autophagy-inducing complex with PIK3C3. Interacts with EI24. Also interacts with APAF1, BBC3, BCL2L1, BNIPL, MRPL41 and TP53BP2. Binding to FKBP8 seems to target BCL2 to the mitochondria and probably interferes with the binding of BCL2 to its targets. Interacts with BAG1 in an ATP-dependent manner. Interacts with RAF1 (the 'Ser-338' and 'Ser-339' phosphorylated form). Interacts (via the BH4 domain) with EGLN3; the interaction prevents the formation of the BAX-BCL2 complex and inhibits the anti-apoptotic activity of BCL2. Interacts with G0S2; this interaction also prevents the formation of the anti-apoptotic BAX-BCL2 complex. Interacts with RTL10/BOP. Interacts with the SCF(FBXO10) complex. Interacts (via the loop between motifs BH4 and BH3) with NLRP1 (via LRR repeats), but not with NLRP2, NLRP3, NLRP4, PYCARD, nor MEFV. Interacts with GIMAP3/IAN4, GIMAP4/IAN1 and GIMAP5/IAN5. Interacts with BCAP31. Interacts with IRF3; the interaction is inhibited by Sendai virus infection. Interacts with BECN1; thereby inhibiting autophagy in non-starvation conditions. Interacts with AMBRA1; thereby inhibiting autophagy. In terms of assembly, (Microbial infection) Interacts with Toxoplasma gondii ROP17; the interaction probably promotes BCL2 phosphorylation and degradation. Phosphorylation/dephosphorylation on Ser-70 regulates anti-apoptotic activity. Growth factor-stimulated phosphorylation on Ser-70 by PKC is required for the anti-apoptosis activity and occurs during the G2/M phase of the cell cycle. In the absence of growth factors, BCL2 appears to be phosphorylated by other protein kinases such as ERKs and stress-activated kinases. Phosphorylated by MAPK8/JNK1 at Thr-69, Ser-70 and Ser-87, which stimulates starvation-induced autophagy. Dephosphorylated by protein phosphatase 2A (PP2A). Post-translationally, proteolytically cleaved by caspases during apoptosis. The cleaved protein, lacking the BH4 motif, has pro-apoptotic activity, causes the release of cytochrome c into the cytosol promoting further caspase activity. In terms of processing, monoubiquitinated by PRKN, leading to an increase in its stability. Ubiquitinated by SCF(FBXO10), leading to its degradation by the proteasome. Ubiquitinated by XIAP, leading to its degradation by the proteasome. In terms of tissue distribution, expressed in a variety of tissues.

It is found in the mitochondrion outer membrane. The protein resides in the nucleus membrane. Its subcellular location is the endoplasmic reticulum membrane. The protein localises to the cytoplasm. Its function is as follows. Suppresses apoptosis in a variety of cell systems including factor-dependent lymphohematopoietic and neural cells. Regulates cell death by controlling the mitochondrial membrane permeability. Appears to function in a feedback loop system with caspases. Inhibits caspase activity either by preventing the release of cytochrome c from the mitochondria and/or by binding to the apoptosis-activating factor (APAF-1). Also acts as an inhibitor of autophagy: interacts with BECN1 and AMBRA1 during non-starvation conditions and inhibits their autophagy function. May attenuate inflammation by impairing NLRP1-inflammasome activation, hence CASP1 activation and IL1B release. The chain is Apoptosis regulator Bcl-2 (BCL2) from Homo sapiens (Human).